The sequence spans 1039 residues: 3',5'-cyclic-AMP phosphodiesterase 4 (1039 aa).

Residues 1–29 form the signal peptide; it reads MFNNNNNDKINNTMMSNNPSGQIINLESI. N-linked (GlcNAc...) asparagine glycans are attached at residues asparagine 11, asparagine 34, and asparagine 37. The Extracellular segment spans residues 30–201; the sequence is DCNSNLSNTT…KKKVNAESLR (172 aa). 2 disordered regions span residues 40–63 and 116–181; these read SIKD…NNIN and IIPN…NNSI. Positions 45–63 are enriched in low complexity; sequence NNNNNNNNNNNNNINNNIN. Asparagine 119, asparagine 124, asparagine 131, asparagine 167, and asparagine 178 each carry an N-linked (GlcNAc...) asparagine glycan. A helical transmembrane segment spans residues 202 to 222; the sequence is GPIIFQNFILYTFFLIVIGTA. Over 223–226 the chain is Cytoplasmic; the sequence is EGTS. A helical transmembrane segment spans residues 227 to 247; sequence WAPEIRVANFVPYCVMCVVLL. The Extracellular portion of the chain corresponds to 248 to 256; it reads EFNRLHKKP. Residues 257-277 traverse the membrane as a helical segment; it reads LLRIIFPLYTSNIPFAYMCIF. Residues 278–283 lie on the Cytoplasmic side of the membrane; sequence SREARK. Residues 284 to 304 traverse the membrane as a helical segment; sequence YVLISLLFFASCLCIFLQSGI. Residues 305–310 are Extracellular-facing; it reads PDLRKH. A helical membrane pass occupies residues 311-331; the sequence is IVIFCIIFMINYGCCILFMDW. The Cytoplasmic portion of the chain corresponds to 332–356; sequence FYIDTTGTKPYRGRILATKIHWGEE. A helical transmembrane segment spans residues 357 to 377; that stretch reads ATILVSMALLGCIFIVLEKFI. The Extracellular portion of the chain corresponds to 378-1039; it reads KSYARCVAEQ…LTQSNYLIVV (662 aa). Positions 384–414 form a coiled coil; sequence VAEQHYQIQCLQKEKEKLQTEINISLKKLDL. N-linked (GlcNAc...) asparagine glycosylation is found at asparagine 406, asparagine 430, asparagine 500, and asparagine 515. Residues 533–973 enclose the PDEase domain; the sequence is PEITDQGIQE…QQLQQQQQQQ (441 aa). Histidine 609 (proton donor) is an active-site residue. Histidine 613, histidine 648, and aspartate 649 together coordinate a divalent metal cation. The tract at residues 738 to 835 is disordered; sequence FPTTTNTQQP…NNSNSNNQNQ (98 aa). Residues 740 to 835 show a composition bias toward low complexity; it reads TTTNTQQPSS…NNSNSNNQNQ (96 aa). N-linked (GlcNAc...) asparagine glycans are attached at residues asparagine 769, asparagine 791, asparagine 795, asparagine 804, asparagine 809, asparagine 823, and asparagine 826. Aspartate 861 serves as a coordination point for a divalent metal cation. 4 N-linked (GlcNAc...) asparagine glycosylation sites follow: asparagine 874, asparagine 944, asparagine 1018, and asparagine 1023. Residues 978–1019 are compositionally biased toward low complexity; the sequence is QQQQQQLHHHQQQQQFQHQQHQQQLQHQHQQQLNNQNQNQNQ. Residues 978 to 1033 form a disordered region; sequence QQQQQQLHHHQQQQQFQHQQHQQQLQHQHQQQLNNQNQNQNQSNSNNSNSFGLTQS. Residues 1020 to 1033 are compositionally biased toward polar residues; the sequence is SNSNNSNSFGLTQS.

The protein belongs to the cyclic nucleotide phosphodiesterase family. The cofactor is a divalent metal cation.

The protein localises to the cell membrane. The enzyme catalyses 3',5'-cyclic AMP + H2O = AMP + H(+). Its activity is regulated as follows. Inhibited by 3-isobutyl-1-methylxanthine (IBMX). Its function is as follows. Phosphodiesterase specific for extracellular cAMP. Involved in the degradation of extracellular cAMP specifically during multicellular development. The polypeptide is 3',5'-cyclic-AMP phosphodiesterase 4 (Pde4) (Dictyostelium discoideum (Social amoeba)).